A 274-amino-acid polypeptide reads, in one-letter code: 2,3,4,5-tetrahydropyridine-2,6-dicarboxylate N-succinyltransferase (274 aa).

Substrate-binding residues include arginine 104 and aspartate 141.

It belongs to the transferase hexapeptide repeat family. In terms of assembly, homotrimer.

Its subcellular location is the cytoplasm. The enzyme catalyses (S)-2,3,4,5-tetrahydrodipicolinate + succinyl-CoA + H2O = (S)-2-succinylamino-6-oxoheptanedioate + CoA. Its pathway is amino-acid biosynthesis; L-lysine biosynthesis via DAP pathway; LL-2,6-diaminopimelate from (S)-tetrahydrodipicolinate (succinylase route): step 1/3. This Shigella boydii serotype 4 (strain Sb227) protein is 2,3,4,5-tetrahydropyridine-2,6-dicarboxylate N-succinyltransferase.